The following is a 190-amino-acid chain: Threonylcarbamoyl-AMP synthase (190 aa).

A YrdC-like domain is found at G7–G190.

This sequence belongs to the SUA5 family. TsaC subfamily.

The protein resides in the cytoplasm. It carries out the reaction L-threonine + hydrogencarbonate + ATP = L-threonylcarbamoyladenylate + diphosphate + H2O. Required for the formation of a threonylcarbamoyl group on adenosine at position 37 (t(6)A37) in tRNAs that read codons beginning with adenine. Catalyzes the conversion of L-threonine, HCO(3)(-)/CO(2) and ATP to give threonylcarbamoyl-AMP (TC-AMP) as the acyladenylate intermediate, with the release of diphosphate. This is Threonylcarbamoyl-AMP synthase from Escherichia coli O1:K1 / APEC.